The primary structure comprises 120 residues: uncharacterized protein (120 aa).

This is an uncharacterized protein from Allochromatium vinosum (strain ATCC 17899 / DSM 180 / NBRC 103801 / NCIMB 10441 / D) (Chromatium vinosum).